A 168-amino-acid polypeptide reads, in one-letter code: Peptide deformylase (168 aa).

Cys92 and His134 together coordinate Fe cation. Residue Glu135 is part of the active site. Residue His138 coordinates Fe cation.

The protein belongs to the polypeptide deformylase family. Fe(2+) serves as cofactor.

The enzyme catalyses N-terminal N-formyl-L-methionyl-[peptide] + H2O = N-terminal L-methionyl-[peptide] + formate. In terms of biological role, removes the formyl group from the N-terminal Met of newly synthesized proteins. Requires at least a dipeptide for an efficient rate of reaction. N-terminal L-methionine is a prerequisite for activity but the enzyme has broad specificity at other positions. This Teredinibacter turnerae (strain ATCC 39867 / T7901) protein is Peptide deformylase.